We begin with the raw amino-acid sequence, 504 residues long: Anaerobic nitric oxide reductase transcription regulator NorR (504 aa).

Asp57 bears the 4-aspartylphosphate mark. Residues Met187 to Val416 form the Sigma-54 factor interaction domain. Residues Gly215–Glu222 and Ala278–Glu287 contribute to the ATP site. The segment at residues Trp479 to Lys498 is a DNA-binding region (H-T-H motif).

The protein operates within nitrogen metabolism; nitric oxide reduction. Required for the expression of anaerobic nitric oxide (NO) reductase, acts as a transcriptional activator for at least the norVW operon. Activation also requires sigma-54. This Escherichia coli (strain 55989 / EAEC) protein is Anaerobic nitric oxide reductase transcription regulator NorR.